The primary structure comprises 254 residues: 5-oxoprolinase subunit A (254 aa).

The protein belongs to the LamB/PxpA family. In terms of assembly, forms a complex composed of PxpA, PxpB and PxpC.

It carries out the reaction 5-oxo-L-proline + ATP + 2 H2O = L-glutamate + ADP + phosphate + H(+). Functionally, catalyzes the cleavage of 5-oxoproline to form L-glutamate coupled to the hydrolysis of ATP to ADP and inorganic phosphate. The sequence is that of 5-oxoprolinase subunit A from Burkholderia lata (strain ATCC 17760 / DSM 23089 / LMG 22485 / NCIMB 9086 / R18194 / 383).